Here is a 429-residue protein sequence, read N- to C-terminus: uncharacterized protein (429 aa).

The next 11 membrane-spanning stretches (helical) occupy residues 27–47, 48–68, 78–98, 106–126, 142–162, 198–218, 219–239, 249–269, 288–308, 351–371, and 399–419; these read PFFF…QSIG, GIMT…VSIL, ILLC…YWVF, IFIL…FLAL, ALII…PAII, LLLA…TIVI, AILT…CFYF, VLLS…YFLD, FIVG…FGYL, LILD…IYFI, and FFIS…LIIL.

The protein localises to the cell membrane. Its function is as follows. May function as a transporter. This is an uncharacterized protein from Klebsiella pneumoniae.